The following is a 340-amino-acid chain: UDP-3-O-(3-hydroxymyristoyl)glucosamine N-acyltransferase (340 aa).

Residue His239 is the Proton acceptor of the active site.

The protein belongs to the transferase hexapeptide repeat family. LpxD subfamily. Homotrimer.

The catalysed reaction is a UDP-3-O-[(3R)-3-hydroxyacyl]-alpha-D-glucosamine + a (3R)-hydroxyacyl-[ACP] = a UDP-2-N,3-O-bis[(3R)-3-hydroxyacyl]-alpha-D-glucosamine + holo-[ACP] + H(+). It carries out the reaction UDP-3-O-[(3R)-3-hydroxytetradecanoyl]-alpha-D-glucosamine + (3R)-hydroxytetradecanoyl-[ACP] = UDP-2-N,3-O-bis[(3R)-3-hydroxytetradecanoyl]-alpha-D-glucosamine + holo-[ACP] + H(+). The protein operates within glycolipid biosynthesis; lipid IV(A) biosynthesis; lipid IV(A) from (3R)-3-hydroxytetradecanoyl-[acyl-carrier-protein] and UDP-N-acetyl-alpha-D-glucosamine: step 3/6. Its function is as follows. Catalyzes the N-acylation of UDP-3-O-(hydroxytetradecanoyl)glucosamine using 3-hydroxytetradecanoyl-ACP as the acyl donor. Is involved in the biosynthesis of lipid A, a phosphorylated glycolipid that anchors the lipopolysaccharide to the outer membrane of the cell. The sequence is that of UDP-3-O-(3-hydroxymyristoyl)glucosamine N-acyltransferase from Pectobacterium atrosepticum (strain SCRI 1043 / ATCC BAA-672) (Erwinia carotovora subsp. atroseptica).